The following is a 357-amino-acid chain: Acidic fibroblast growth factor intracellular-binding protein (357 aa).

N-acetylthreonine is present on Thr-2.

As to quaternary structure, binds to internalized FGF1; this interaction is increased in the presence of CSNKB, suggesting a possible cooperative interaction between CSNKB and FIBP in binding to FGF1.

Its subcellular location is the nucleus. It localises to the endomembrane system. May be involved in mitogenic function of FGF1. May mediate with IER2 FGF-signaling in the establishment of laterality in the embryo. The chain is Acidic fibroblast growth factor intracellular-binding protein (FIBP) from Chlorocebus aethiops (Green monkey).